We begin with the raw amino-acid sequence, 437 residues long: Nuclear envelope integral membrane protein 1 (437 aa).

Residues 1–44 (MAGGIKVSVWSAVGPGPRCWGAGGGGGATWLLLVVAGCVVCGSA) form the signal peptide. Asn123 is a glycosylation site (N-linked (GlcNAc...) asparagine). The next 5 helical transmembrane spans lie at 159 to 179 (PKLF…DLLS), 183 to 203 (IFYY…IVIF), 214 to 234 (PIYV…QLVF), 244 to 264 (YWHY…AVCY), and 288 to 308 (GLMY…VIAL). The tract at residues 184–295 (FYYSTGMSVG…GLGLMYSSIQ (112 aa)) is a; required for its colocalization with lamins at the nuclear envelope. The segment at 334-403 (PVPPRLLTEE…LTPNEVSVHE (70 aa)) is b; required for interaction with RAN-GTP. The segment at 334–437 (PVPPRLLTEE…PTFTQNNFLT (104 aa)) is required for nuclear localization. Residues Ser366, Ser419, and Ser420 each carry the phosphoserine modification. The span at 415–425 (DEELSSEEEGS) shows a compositional bias: acidic residues. Residues 415 to 437 (DEELSSEEEGSEYPTFTQNNFLT) are disordered. The segment covering 428–437 (PTFTQNNFLT) has biased composition (polar residues).

It belongs to the NEMP family. Homooligomer. Interacts with RAN-GTP. Interacts with EMD. Phosphorylated. Phosphorylation may regulate its interaction with RAN-GTP. As to expression, in the ovary, expression is strongest in primordial follicle oocytes and rapidly declines as oocytes mature and move from the cortex (at protein level).

Its subcellular location is the nucleus inner membrane. The protein localises to the nucleus envelope. Its function is as follows. Together with EMD, contributes to nuclear envelope stiffness in germ cells. Required for female fertility. Essential for normal erythropoiesis. Required for efficient nuclear envelope opening and enucleation during the late stages of erythroblast maturation. The protein is Nuclear envelope integral membrane protein 1 (Nemp1) of Mus musculus (Mouse).